Here is a 378-residue protein sequence, read N- to C-terminus: Alpha-D-ribose 1-methylphosphonate 5-triphosphate diphosphatase (378 aa).

The protein belongs to the metallo-dependent hydrolases superfamily.

The enzyme catalyses alpha-D-ribose 1-methylphosphonate 5-triphosphate + H2O = alpha-D-ribose 1-methylphosphonate 5-phosphate + diphosphate + H(+). Its function is as follows. Catalyzes the hydrolysis of alpha-D-ribose 1-methylphosphonate triphosphate (RPnTP) to form alpha-D-ribose 1-methylphosphonate phosphate (PRPn) and diphosphate. The protein is Alpha-D-ribose 1-methylphosphonate 5-triphosphate diphosphatase (phnM) of Escherichia coli (strain K12).